Here is a 289-residue protein sequence, read N- to C-terminus: Protoheme IX farnesyltransferase (289 aa).

A run of 9 helical transmembrane segments spans residues 13–33, 40–60, 85–105, 111–131, 139–159, 168–188, 212–232, 234–254, and 269–289; these read LIKPRVTSLVLATIIPGLYLA, VFLITVTLFGTFLMSSASFIF, ISIPQATLVGISMMGLSFYML, LLTALCALTALISYVFLYTIF, NIVIGGVAGCVGPLIGYAAIG, ILFTMIFLWTPAHFWALAIFL, SIFFYTILYSLSCVSFYFLEP, MGLLYLVIVLLVCIWMGILSY, and FLFSIFHLFLINITIVVDHMI.

It belongs to the UbiA prenyltransferase family. Protoheme IX farnesyltransferase subfamily.

Its subcellular location is the cell inner membrane. The catalysed reaction is heme b + (2E,6E)-farnesyl diphosphate + H2O = Fe(II)-heme o + diphosphate. It functions in the pathway porphyrin-containing compound metabolism; heme O biosynthesis; heme O from protoheme: step 1/1. Its function is as follows. Converts heme B (protoheme IX) to heme O by substitution of the vinyl group on carbon 2 of heme B porphyrin ring with a hydroxyethyl farnesyl side group. This chain is Protoheme IX farnesyltransferase, found in Leptospira borgpetersenii serovar Hardjo-bovis (strain JB197).